Reading from the N-terminus, the 601-residue chain is Proteasome-associated ATPase (601 aa).

Gly residues predominate over residues 1–15 (MSGPRSGSGSGGSTG). Residues 1–31 (MSGPRSGSGSGGSTGRPGDAESRRSAYEKEA) are disordered. Over residues 18-31 (GDAESRRSAYEKEA) the composition is skewed to basic and acidic residues. The stretch at 18 to 106 (GDAESRRSAY…LKEEVDRLAQ (89 aa)) forms a coiled coil. 289–294 (GCGKTL) serves as a coordination point for ATP. Residues 600 to 601 (YL) form a docks into pockets in the proteasome alpha-ring region.

The protein belongs to the AAA ATPase family. Homohexamer. Assembles into a hexameric ring structure that caps the 20S proteasome core. Strongly interacts with the prokaryotic ubiquitin-like protein Pup through a hydrophobic interface; the interacting region of ARC lies in its N-terminal coiled-coil domain. There is one Pup binding site per ARC hexamer ring. Upon ATP-binding, the C-terminus of ARC interacts with the alpha-rings of the proteasome core, possibly by binding to the intersubunit pockets.

It functions in the pathway protein degradation; proteasomal Pup-dependent pathway. Its function is as follows. ATPase which is responsible for recognizing, binding, unfolding and translocation of pupylated proteins into the bacterial 20S proteasome core particle. May be essential for opening the gate of the 20S proteasome via an interaction with its C-terminus, thereby allowing substrate entry and access to the site of proteolysis. Thus, the C-termini of the proteasomal ATPase may function like a 'key in a lock' to induce gate opening and therefore regulate proteolysis. The chain is Proteasome-associated ATPase from Frankia alni (strain DSM 45986 / CECT 9034 / ACN14a).